Consider the following 235-residue polypeptide: MKHQTIDQLKKLTGHSFKNEDLLKKALTHSSVQRSEQGNYERLEFLGDRVLGLLVAEMLYQFFPQASEGELSVRLNGLVNAQTCADIAREIGLPDMVHVGCEMKNLEGRRLANMHADVVEALIAVIYLDGGLKSVRPFIQRYWQDRAKKIDASRRDAKTELQEWAHTQNGVQPQYRVIKRCGLDHDPVFVVEVSVPGFVSEVGEGGSKRHAERAAAEKILRREGMWGSIEKDDHG.

In terms of domain architecture, RNase III spans 6-131 (IDQLKKLTGH…LIAVIYLDGG (126 aa)). Glu44 serves as a coordination point for Mg(2+). Residue Asp48 is part of the active site. Positions 117 and 120 each coordinate Mg(2+). The active site involves Glu120. Residues 156–225 (DAKTELQEWA…AEKILRREGM (70 aa)) enclose the DRBM domain.

Belongs to the ribonuclease III family. In terms of assembly, homodimer. Requires Mg(2+) as cofactor.

The protein localises to the cytoplasm. It carries out the reaction Endonucleolytic cleavage to 5'-phosphomonoester.. In terms of biological role, digests double-stranded RNA. Involved in the processing of primary rRNA transcript to yield the immediate precursors to the large and small rRNAs (23S and 16S). Processes some mRNAs, and tRNAs when they are encoded in the rRNA operon. Processes pre-crRNA and tracrRNA of type II CRISPR loci if present in the organism. This Bartonella bacilliformis (strain ATCC 35685 / KC583 / Herrer 020/F12,63) protein is Ribonuclease 3.